The sequence spans 470 residues: Calcium/manganese antiporter SLC30A10 (470 aa).

Residues 1–10 (MGRYSGKTCR) lie on the Cytoplasmic side of the membrane. Residues 11-31 (LLFMLVLTAAFFVAELVSGYL) traverse the membrane as a helical segment. The Extracellular segment spans residues 32-34 (GNS). Residues 35 to 55 (IALLSDSFNMLSDLISLCVGL) form a helical membrane-spanning segment. Over 56-81 (GSGYIARRGPRGSSATYGYVRAEVVG) the chain is Cytoplasmic. A helical membrane pass occupies residues 82-102 (ALSNAVFLTALCFTIFVEAVL). The Extracellular segment spans residues 103–113 (RLARPERIDDP). The chain crosses the membrane as a helical span at residues 114 to 134 (ELVLIVGALGLAVNVVGLLIF). Over 135–233 (QDCGACFSRC…KSEALNIRGV (99 aa)) the chain is Cytoplasmic. The tract at residues 146 to 223 (RGRRTRPSQQ…EPEETTKKEK (78 aa)) is disordered. A compositionally biased stretch (low complexity) spans 171–184 (AATATAPGSGTAVT). The chain crosses the membrane as a helical span at residues 234–254 (LLHVMGDALGSVVVVITAIIF). Residues 255–270 (YVQPLRREDPCNWQCY) are Extracellular-facing. The helical transmembrane segment at 271–291 (IDPSLTVVMVIIILSSAFPLI) threads the bilayer. Topologically, residues 292–470 (KETAVILLQM…RQHYENSTHF (179 aa)) are cytoplasmic. Residues 300–470 (QMVPKGVNME…RQHYENSTHF (171 aa)) form a required for plasma membrane localization region. Residues 451–470 (QGQTLSKTQERQHYENSTHF) form a disordered region. A compositionally biased stretch (basic and acidic residues) spans 458-470 (TQERQHYENSTHF).

It belongs to the cation diffusion facilitator (CDF) transporter (TC 2.A.4) family. SLC30A subfamily. As to quaternary structure, forms homodimers. Forms heterodimers and high-molecular weight oligomers with SLC30A3, SLC30A2 and SLC30A4; heterodimerization is mediated by covalent-bound tyrosine residues, occurs probably in a tissue-specific manner and could mediate the intracellular zinc transport activity into early endosomes and recycling endosomes. In terms of tissue distribution, specifically expressed in fetal liver and fetal brain.

The protein localises to the cell membrane. It is found in the golgi apparatus membrane. Its subcellular location is the recycling endosome membrane. It localises to the early endosome membrane. It carries out the reaction Mn(2+)(out) + Ca(2+)(in) = Mn(2+)(in) + Ca(2+)(out). The enzyme catalyses Zn(2+)(in) = Zn(2+)(out). Functionally, calcium:manganese antiporter of the plasma membrane mediating the efflux of intracellular manganese coupled to an active extracellular calcium exchange. Required for intracellular manganese homeostasis, an essential cation for the function of several enzymes, including some crucially important for the metabolism of neurotransmitters and other neuronal metabolic pathways. Manganese can also be cytotoxic and induce oxidative stress, mitochondrial dysfunction and apoptosis. Could also have an intracellular zinc ion transporter activity, directly regulating intracellular zinc ion homeostasis and more indirectly various signaling pathway and biological processes. The chain is Calcium/manganese antiporter SLC30A10 from Mus musculus (Mouse).